Reading from the N-terminus, the 1496-residue chain is Chromosome partition protein MukB (1496 aa).

63–70 is a binding site for ATP; the sequence is GGNGAGKS. Coiled coils occupy residues 328 to 493 and 536 to 632; these read KLEL…QRLS and KMQA…APAW. A flexible hinge region spans residues 694–811; the sequence is PDGSDDVRLN…EVPLFGRAAR (118 aa). Coiled coils occupy residues 861–1171 and 1235–1291; these read NPEE…SAEE and IDAI…LQNI. The segment covering 1082-1091 has biased composition (basic and acidic residues); that stretch reads RARSRRDELQ. Positions 1082–1101 are disordered; sequence RARSRRDELQQRLSQQRSRK.

This sequence belongs to the SMC family. MukB subfamily. As to quaternary structure, homodimerization via its hinge domain. Binds to DNA via its C-terminal region. Interacts, and probably forms a ternary complex, with MukE and MukF via its C-terminal region. The complex formation is stimulated by calcium or magnesium. Interacts with tubulin-related protein FtsZ.

Its subcellular location is the cytoplasm. The protein localises to the nucleoid. Functionally, plays a central role in chromosome condensation, segregation and cell cycle progression. Functions as a homodimer, which is essential for chromosome partition. Involved in negative DNA supercoiling in vivo, and by this means organize and compact chromosomes. May achieve or facilitate chromosome segregation by condensation DNA from both sides of a centrally located replisome during cell division. The protein is Chromosome partition protein MukB of Actinobacillus pleuropneumoniae serotype 7 (strain AP76).